Reading from the N-terminus, the 281-residue chain is 2,3,4,5-tetrahydropyridine-2,6-dicarboxylate N-succinyltransferase (281 aa).

The protein belongs to the transferase hexapeptide repeat family.

The protein localises to the cytoplasm. The catalysed reaction is (S)-2,3,4,5-tetrahydrodipicolinate + succinyl-CoA + H2O = (S)-2-succinylamino-6-oxoheptanedioate + CoA. The protein operates within amino-acid biosynthesis; L-lysine biosynthesis via DAP pathway; LL-2,6-diaminopimelate from (S)-tetrahydrodipicolinate (succinylase route): step 1/3. The protein is 2,3,4,5-tetrahydropyridine-2,6-dicarboxylate N-succinyltransferase of Methylobacterium sp. (strain 4-46).